A 154-amino-acid polypeptide reads, in one-letter code: Ribonuclease 8 (154 aa).

Residues 1–27 (MAPARAGCCPLLLLLLGLRVAQIPVSA) form the signal peptide. H42 functions as the Proton acceptor in the catalytic mechanism. 3 cysteine pairs are disulfide-bonded: C64-C118, C82-C133, and C89-C96. Substrate contacts are provided by residues 65–69 (KDLNT) and K90. The Proton donor role is filled by H149.

This sequence belongs to the pancreatic ribonuclease family.

Its subcellular location is the secreted. Functionally, has a low ribonuclease activity. This chain is Ribonuclease 8 (RNASE8), found in Miopithecus talapoin (Angolan talapoin).